Reading from the N-terminus, the 788-residue chain is Endonuclease MutS2 (788 aa).

Residue 332 to 339 coordinates ATP; sequence GPNTGGKT. The Smr domain maps to 713–788; that stretch reads VDLRGMDAEE…GTGVTVVELK (76 aa).

It belongs to the DNA mismatch repair MutS family. MutS2 subfamily. In terms of assembly, homodimer. Binds to stalled ribosomes, contacting rRNA.

Its function is as follows. Endonuclease that is involved in the suppression of homologous recombination and thus may have a key role in the control of bacterial genetic diversity. Acts as a ribosome collision sensor, splitting the ribosome into its 2 subunits. Detects stalled/collided 70S ribosomes which it binds and splits by an ATP-hydrolysis driven conformational change. Acts upstream of the ribosome quality control system (RQC), a ribosome-associated complex that mediates the extraction of incompletely synthesized nascent chains from stalled ribosomes and their subsequent degradation. Probably generates substrates for RQC. This chain is Endonuclease MutS2, found in Clostridium botulinum (strain Langeland / NCTC 10281 / Type F).